The primary structure comprises 280 residues: Shikimate dehydrogenase (NADP(+)) (280 aa).

Shikimate is bound by residues 20–22 (SLS) and Thr67. Lys71 functions as the Proton acceptor in the catalytic mechanism. 2 residues coordinate shikimate: Asn92 and Asp107. Residues 131–135 (GAGGA) and Gly220 each bind NADP(+). Shikimate is bound at residue Tyr222. Gly243 lines the NADP(+) pocket.

It belongs to the shikimate dehydrogenase family. As to quaternary structure, homodimer.

It catalyses the reaction shikimate + NADP(+) = 3-dehydroshikimate + NADPH + H(+). The protein operates within metabolic intermediate biosynthesis; chorismate biosynthesis; chorismate from D-erythrose 4-phosphate and phosphoenolpyruvate: step 4/7. In terms of biological role, involved in the biosynthesis of the chorismate, which leads to the biosynthesis of aromatic amino acids. Catalyzes the reversible NADPH linked reduction of 3-dehydroshikimate (DHSA) to yield shikimate (SA). The chain is Shikimate dehydrogenase (NADP(+)) from Maricaulis maris (strain MCS10) (Caulobacter maris).